The following is a 376-amino-acid chain: 26S proteasome non-ATPase regulatory subunit 13 (376 aa).

One can recognise a PCI domain in the interval 171–338; sequence SYYKDALRFL…KRVHMTWVQP (168 aa). At Lys298 the chain carries N6-acetyllysine.

The protein belongs to the proteasome subunit S11 family. In terms of assembly, component of the 19S proteasome regulatory particle complex. The 26S proteasome consists of a 20S core particle (CP) and two 19S regulatory subunits (RP). The regulatory particle is made of a lid composed of 9 subunits including PSMD13, a base containing 6 ATPases and few additional components.

In terms of biological role, component of the 26S proteasome, a multiprotein complex involved in the ATP-dependent degradation of ubiquitinated proteins. This complex plays a key role in the maintenance of protein homeostasis by removing misfolded or damaged proteins, which could impair cellular functions, and by removing proteins whose functions are no longer required. Therefore, the proteasome participates in numerous cellular processes, including cell cycle progression, apoptosis, or DNA damage repair. This chain is 26S proteasome non-ATPase regulatory subunit 13 (PSMD13), found in Homo sapiens (Human).